The chain runs to 455 residues: SVGFKAGVKDYKLTYYTPDYETKDTDILAAFRVTPQPGVPPEEAGAAVAAESSTGTWTTVWTDGLTSLDRYKGRCYHIEPVAGEENQFIAYVAYPLDLFEEGSVTNMFTSIVGNVFGFKALRALRLEDLRIPNAYVKTFQGPPHGIQVERDKLNKYGRPLLGCTIKPKLGLSAKNYGRAVYECLRGGLDFTKDDENVNSQPFMRWRDRFLFCAEALYKAQAETGEIKGHYLNATAGTCEEMIKRAVFARELGVPIVMHDYLTGGFTANTSLAHYCRDNGLLLHIHRAMHAVIDRQKNHGMHFRVLAKALRLSGGDHIHSGTVVGKLEGEREITLGFVDLLRDDFVEKDRSRGIYFTQDWVSLPGVLPVASGGIHVWHMPALTEIFGDDSVLQFGGGTLGHPWGNAPGAVANRVALEACVQARNEGRDLASEGNQIIREASKWSPELAAACEVWKE.

Lys-5 carries the post-translational modification N6,N6,N6-trimethyllysine. Residues Asn-114 and Thr-164 each contribute to the substrate site. Lys-166 (proton acceptor) is an active-site residue. A substrate-binding site is contributed by Lys-168. Residues Lys-192, Asp-194, and Glu-195 each contribute to the Mg(2+) site. Lys-192 carries the N6-carboxylysine modification. His-285 serves as the catalytic Proton acceptor. Substrate-binding residues include Arg-286, His-318, and Ser-370.

This sequence belongs to the RuBisCO large chain family. Type I subfamily. As to quaternary structure, heterohexadecamer of 8 large chains and 8 small chains; disulfide-linked. The disulfide link is formed within the large subunit homodimers. Requires Mg(2+) as cofactor. In terms of processing, the disulfide bond which can form in the large chain dimeric partners within the hexadecamer appears to be associated with oxidative stress and protein turnover.

The protein localises to the plastid. Its subcellular location is the chloroplast. It carries out the reaction 2 (2R)-3-phosphoglycerate + 2 H(+) = D-ribulose 1,5-bisphosphate + CO2 + H2O. The catalysed reaction is D-ribulose 1,5-bisphosphate + O2 = 2-phosphoglycolate + (2R)-3-phosphoglycerate + 2 H(+). Its function is as follows. RuBisCO catalyzes two reactions: the carboxylation of D-ribulose 1,5-bisphosphate, the primary event in carbon dioxide fixation, as well as the oxidative fragmentation of the pentose substrate in the photorespiration process. Both reactions occur simultaneously and in competition at the same active site. This chain is Ribulose bisphosphate carboxylase large chain, found in Lupinus albus (White lupine).